The primary structure comprises 1088 residues: Extended synaptotagmin-1 (1088 aa).

Met1 bears the N-acetylmethionine mark. The Cytoplasmic segment spans residues Met1 to Ser30. A disordered region spans residues Met1–Gly38. The chain crosses the membrane as a helical span at residues Gly31–Gly51. The Lumenal portion of the chain corresponds to Arg52–Leu54. Residues Leu55 to Phe75 form a helical membrane-spanning segment. Topologically, residues Gly76 to Ser1088 are cytoplasmic. Residues Asp127–Val305 form the SMP-LTD domain. 4 consecutive C2 domains span residues Leu304–Tyr425, Asp446–Ser572, Asp618–Leu740, and Gln771–Gly888. Ser316 bears the Phosphoserine; by CDK5 mark. Lys336, Asp337, Asp349, Asp396, Asp398, Asp400, Asp402, and Asp403 together coordinate Ca(2+). Residues Thr599 to Ser630 form a disordered region. Lys806 carries the N6-acetyllysine modification. At Ser809 the chain carries Phosphoserine. The disordered stretch occupies residues His911 to His930. Phosphoserine occurs at positions 933 and 947. Residues Pro955–Tyr1077 form the C2 5 domain. At Tyr993 the chain carries Phosphotyrosine. The tract at residues Lys1002–Lys1009 is required for phosphatidylinositol 4,5-bisphosphate-dependent location at the cell membrane.

The protein belongs to the extended synaptotagmin family. In terms of assembly, interacts with ESYT2 and ESYT3. Interacts with ADGRD1; inhibiting the G-protein-coupled receptor activity of ADGRD1. Interaction with ADGRD1 is abolished when cytosolic calcium increases, relieving ADGRD1 G-protein-coupled receptor activity. Interacts (phosphorylated form) with SLC2A4. Phosphorylated on Ser residues in insulin-treated adipocytes (in vitro); this promotes interaction with SLC2A4. In terms of tissue distribution, ubiquitously expressed with a higher expression in spleen and white adipose tissue.

It localises to the endoplasmic reticulum membrane. It is found in the cell membrane. Binds calcium (via the C2 domains) and translocates to sites of contact between the endoplasmic reticulum and the cell membrane in response to increased cytosolic calcium levels. Helps tether the endoplasmic reticulum to the cell membrane and promotes the formation of appositions between the endoplasmic reticulum and the cell membrane. Acts as an inhibitor of ADGRD1 G-protein-coupled receptor activity in absence of cytosolic calcium. Binds glycerophospholipids in a barrel-like domain and may play a role in cellular lipid transport. This is Extended synaptotagmin-1 (Esyt1) from Rattus norvegicus (Rat).